Here is a 1863-residue protein sequence, read N- to C-terminus: Calcineurin-binding protein 1 (1863 aa).

TPR repeat units follow at residues 30-65 (LSQTYHDGLLKLQAKDYDKARELLESILKDPIITNS), 81-116 (FLALKNLATVFLELGSSHYENALNCYLQAIDLDAKD), and 118-150 (VLWNHLGTLSCSMGLLSISRWAFEQGLLCSPNN). The segment at 315–361 (ERESGGSVKEKEPVFSEEHPQERRSTRLERLRNQKPEKEGLEFDNSK) is disordered. 12 TPR repeats span residues 543–576 (ARYFWLSARLSILEDNKAKALEEYLRCLSLLGRE), 602–637 (IHEINLLKIDFLLENNIPEMMEKEFYSECVNLLAPL), 866–900 (INSPDGLGHDMGLPDKLCRNEVKSFLEEVHVEKNE), 955–988 (QCFFCLYGLNLRVDGSYEDELAVHKNTSRGDYQT), 990–1009 (EQCVDVFQYILPYAKASSRT), 1011–1031 (LVKLRRVLRAIKKHFSQPPDD), 1143–1183 (FESW…SQRV), 1226–1263 (VPFYDQRSVLPSKDATWTRFCENSMKHFNKAFSHRQDW), 1264–1297 (SHAFYMGKLSEKLGHSYEISLSYYKQAMTLNPSA), 1306–1339 (ASRLKLLNACGKQNLEALKVLASYCFDESIKDTA), 1377–1412 (EGVWHMLYNDSLSALGICVEGDLKHFHKARYMLAQG), and 1508–1541 (NSLRSDKRFSLCVEDLVPVAIGRYVKALVSSMSR). Residues 894–923 (VHVEKNENNKTESKKDGSEEQVGYREKEQS) show a composition bias toward basic and acidic residues. Positions 894 to 941 (VHVEKNENNKTESKKDGSEEQVGYREKEQSEQQSKQIPEHTEEVAEEE) are disordered. The segment at 1813–1840 (KMKRGASTSSVVPSVQSGGTSEPEPAPK) is disordered. The segment covering 1818 to 1832 (ASTSSVVPSVQSGGT) has biased composition (polar residues).

Component of the HIRA complex made of UBN1, UBN2, ASF1A, CABIN1 and HIRA. Expressed at low levels in seedlings.

The protein resides in the nucleus. Its function is as follows. May be required for replication-independent chromatin assembly. This chain is Calcineurin-binding protein 1, found in Arabidopsis thaliana (Mouse-ear cress).